We begin with the raw amino-acid sequence, 306 residues long: Ribosomal protein L11 methyltransferase (306 aa).

S-adenosyl-L-methionine is bound by residues threonine 154, glycine 179, aspartate 201, and asparagine 242.

This sequence belongs to the methyltransferase superfamily. PrmA family.

It localises to the cytoplasm. It catalyses the reaction L-lysyl-[protein] + 3 S-adenosyl-L-methionine = N(6),N(6),N(6)-trimethyl-L-lysyl-[protein] + 3 S-adenosyl-L-homocysteine + 3 H(+). Methylates ribosomal protein L11. This chain is Ribosomal protein L11 methyltransferase, found in Xanthomonas euvesicatoria pv. vesicatoria (strain 85-10) (Xanthomonas campestris pv. vesicatoria).